The sequence spans 432 residues: Glutamyl-tRNA reductase (432 aa).

Substrate contacts are provided by residues threonine 50–arginine 53, serine 110, glutamate 115–glutamine 117, and glutamine 121. Catalysis depends on cysteine 51, which acts as the Nucleophile. Residue glycine 190 to serine 195 participates in NADP(+) binding.

This sequence belongs to the glutamyl-tRNA reductase family. As to quaternary structure, homodimer.

It carries out the reaction (S)-4-amino-5-oxopentanoate + tRNA(Glu) + NADP(+) = L-glutamyl-tRNA(Glu) + NADPH + H(+). The protein operates within porphyrin-containing compound metabolism; protoporphyrin-IX biosynthesis; 5-aminolevulinate from L-glutamyl-tRNA(Glu): step 1/2. In terms of biological role, catalyzes the NADPH-dependent reduction of glutamyl-tRNA(Glu) to glutamate 1-semialdehyde (GSA). The polypeptide is Glutamyl-tRNA reductase (Sulfurimonas denitrificans (strain ATCC 33889 / DSM 1251) (Thiomicrospira denitrificans (strain ATCC 33889 / DSM 1251))).